The following is a 413-amino-acid chain: Na(+)-translocating NADH-quinone reductase subunit B (413 aa).

Helical transmembrane passes span Ile55–Gly75, Phe128–Met148, and Ile163–Thr183. Thr235 is modified (FMN phosphoryl threonine). 5 helical membrane-spanning segments follow: residues Ile267–Val287, Ile296–Ser316, Met324–Thr344, Trp357–Tyr377, and Gly380–Ile400.

The protein belongs to the NqrB/RnfD family. Composed of six subunits; NqrA, NqrB, NqrC, NqrD, NqrE and NqrF. Requires FMN as cofactor.

It is found in the cell inner membrane. It carries out the reaction a ubiquinone + n Na(+)(in) + NADH + H(+) = a ubiquinol + n Na(+)(out) + NAD(+). Functionally, NQR complex catalyzes the reduction of ubiquinone-1 to ubiquinol by two successive reactions, coupled with the transport of Na(+) ions from the cytoplasm to the periplasm. NqrA to NqrE are probably involved in the second step, the conversion of ubisemiquinone to ubiquinol. This Vibrio campbellii (strain ATCC BAA-1116) protein is Na(+)-translocating NADH-quinone reductase subunit B.